We begin with the raw amino-acid sequence, 273 residues long: Dormancy associated translation inhibitor (273 aa).

In terms of assembly, interacts with human TLR2.

Its function is as follows. Involved in translation regulation. Can also stimulate macrophages and peripheral blood mononuclear cells (PBMC) to secrete important cytokines that may be significant in granuloma formation and its maintenance. Increases secretion of IFN-gamma, TNF-alpha, IL-1 beta and IL-8 through human Toll-like receptor 2 (TLR2) signaling pathway. This chain is Dormancy associated translation inhibitor, found in Mycobacterium tuberculosis (strain CDC 1551 / Oshkosh).